A 149-amino-acid polypeptide reads, in one-letter code: Aquaporin-like protein 2 (149 aa).

Positions 1 to 35 are disordered; it reads MSNESNDLEKNISHLDPTGVDNAYIPPEQPETKHS. The Cytoplasmic portion of the chain corresponds to 1–47; the sequence is MSNESNDLEKNISHLDPTGVDNAYIPPEQPETKHSRFNIDRDTLRNH. Residues 48-68 form a helical membrane-spanning segment; it reads FIAAVGEFCGTFMFLWCAYVI. The Extracellular segment spans residues 69–89; it reads CNVANHDVALTTEPEGSHPGQ. The chain crosses the membrane as a helical span at residues 90–110; that stretch reads LIMIALGFGFSVMFSIWCFWW. Topologically, residues 111–149 are cytoplasmic; the sequence is GFEPSRFSLFVFGQSHLTSQMCSDVVSSDHCWDGCWWCR.

This sequence belongs to the MIP/aquaporin (TC 1.A.8) family.

It is found in the endoplasmic reticulum membrane. It localises to the cell membrane. In terms of biological role, water channel required to facilitate the transport of water across membranes. Involved in freeze tolerance, osmotolerance and cell flocculation in liquid cultures. Is non-functional in most laboratory strains. The chain is Aquaporin-like protein 2 (AQY2-2) from Saccharomyces cerevisiae (strain JAY291) (Baker's yeast).